The sequence spans 500 residues: Potassium/proton antiporter CemA (500 aa).

Residues 129–149 (LFLTTIKTIFILFFVPFLVNF) form a helical membrane-spanning segment. The insert stretch occupies residues 204–354 (HQTHRDSKPL…GSLDSIKNKD (151 aa)). 3 helical membrane passes run 378–398 (ITNF…LITL), 425–445 (ILLI…ELFF), and 461–481 (IFLL…YLIF).

Belongs to the CemA family.

The protein localises to the plastid. Its subcellular location is the chloroplast inner membrane. The enzyme catalyses K(+)(in) + H(+)(out) = K(+)(out) + H(+)(in). Its function is as follows. Contributes to K(+)/H(+) antiport activity by supporting proton efflux to control proton extrusion and homeostasis in chloroplasts in a light-dependent manner to modulate photosynthesis. Prevents excessive induction of non-photochemical quenching (NPQ) under continuous-light conditions. Indirectly promotes efficient inorganic carbon uptake into chloroplasts. This is Potassium/proton antiporter CemA from Chlamydomonas reinhardtii (Chlamydomonas smithii).